The chain runs to 109 residues: Parvalbumin, muscle (109 aa).

Residue Ala-1 is modified to N-acetylalanine. 2 EF-hand domains span residues 38–73 (KSPE…FTPD) and 77–109 (LSDK…VAES). The Ca(2+) site is built by Asp-51, Asp-53, Ser-55, Glu-62, Asp-90, Asp-92, Asp-94, Lys-96, and Glu-101.

The protein belongs to the parvalbumin family.

Functionally, in muscle, parvalbumin is thought to be involved in relaxation after contraction. It binds two calcium ions. The protein is Parvalbumin, muscle of Gallus gallus (Chicken).